The following is a 323-amino-acid chain: Beta-ketoacyl-[acyl-carrier-protein] synthase III (323 aa).

Residues Cys-114 and His-250 contribute to the active site. An ACP-binding region spans residues 251–255; sequence QANIR. Residue Asn-280 is part of the active site.

Belongs to the thiolase-like superfamily. FabH family. In terms of assembly, homodimer.

Its subcellular location is the cytoplasm. The catalysed reaction is malonyl-[ACP] + acetyl-CoA + H(+) = 3-oxobutanoyl-[ACP] + CO2 + CoA. It participates in lipid metabolism; fatty acid biosynthesis. Catalyzes the condensation reaction of fatty acid synthesis by the addition to an acyl acceptor of two carbons from malonyl-ACP. Catalyzes the first condensation reaction which initiates fatty acid synthesis and may therefore play a role in governing the total rate of fatty acid production. Possesses both acetoacetyl-ACP synthase and acetyl transacylase activities. Its substrate specificity determines the biosynthesis of branched-chain and/or straight-chain of fatty acids. In Roseobacter denitrificans (strain ATCC 33942 / OCh 114) (Erythrobacter sp. (strain OCh 114)), this protein is Beta-ketoacyl-[acyl-carrier-protein] synthase III.